The sequence spans 366 residues: GTP cyclohydrolase 1 type 2 homolog (366 aa).

Positions 64, 65, 102, 326, and 329 each coordinate Zn(2+).

This sequence belongs to the GTP cyclohydrolase I type 2/NIF3 family. Homohexamer.

This is GTP cyclohydrolase 1 type 2 homolog from Staphylococcus aureus (strain MRSA252).